Here is a 333-residue protein sequence, read N- to C-terminus: Tetraacyldisaccharide 4'-kinase (333 aa).

55 to 62 contributes to the ATP binding site; the sequence is TAGGNGKT.

The protein belongs to the LpxK family.

The catalysed reaction is a lipid A disaccharide + ATP = a lipid IVA + ADP + H(+). The protein operates within glycolipid biosynthesis; lipid IV(A) biosynthesis; lipid IV(A) from (3R)-3-hydroxytetradecanoyl-[acyl-carrier-protein] and UDP-N-acetyl-alpha-D-glucosamine: step 6/6. Transfers the gamma-phosphate of ATP to the 4'-position of a tetraacyldisaccharide 1-phosphate intermediate (termed DS-1-P) to form tetraacyldisaccharide 1,4'-bis-phosphate (lipid IVA). This chain is Tetraacyldisaccharide 4'-kinase, found in Proteus mirabilis (strain HI4320).